Consider the following 34-residue polypeptide: Corticostatin-2 (34 aa).

3 disulfide bridges follow: Cys3–Cys32, Cys5–Cys21, and Cys11–Cys31.

This sequence belongs to the alpha-defensin family.

It localises to the secreted. Its function is as follows. Microbicidal activity and inhibits corticotropin (ACTH) stimulated corticosterone production. This is Corticostatin-2 from Oryctolagus cuniculus (Rabbit).